A 191-amino-acid polypeptide reads, in one-letter code: Rho-related GTP-binding protein RhoG (191 aa).

GTP is bound at residue 10–17 (GDGAVGKT). Positions 32–40 (YIPTVFDNY) match the Effector region motif. Residues 57–61 (DTAGQ) and 115–118 (TKKD) contribute to the GTP site. Thr138 and Thr180 each carry phosphothreonine. Cys188 is subject to Cysteine methyl ester. Cys188 carries the S-geranylgeranyl cysteine lipid modification. Residues 189–191 (ILL) constitute a propeptide, removed in mature form.

It belongs to the small GTPase superfamily. Rho family. As to quaternary structure, interacts with ARHGEF26. Interacts with ARHGEF16. Interacts with UNC13D; the interaction increases RhoG affinity to the membrane lipids, targets UNC13D to membrane lipids and facilitates cytotoxic granule (CG) docking to the plasma membrane.

Its subcellular location is the cell membrane. Its function is as follows. Plays a role in immunological synaptic F-actin density and architecture organization. Regulates actin reorganization in lymphocytes, possibly through the modulation of Rac1 activity. Required for the formation of membrane ruffles during macropinocytosis. Plays a role in cell migration and is required for the formation of cup-like structures during trans-endothelial migration of leukocytes. Binds phospholipids in an activation-dependent manner; thereby acting as an anchor for other proteins to the plasma membrane (PM). Plays a role in exocytosis of cytotoxic granules (CG) by lymphocytes/Component of the exocytosis machinery in natural killer (NK) and CD8+ T cells. Promotes the docking of cytotoxic granules (CG) to the plasma membrane through the interaction with UNC13D. Involved in the cytotoxic activity of lymphocytes/primary CD8+ T cells. This Cricetus cricetus (Black-bellied hamster) protein is Rho-related GTP-binding protein RhoG (RHOG).